The following is a 706-amino-acid chain: ATP-dependent DNA helicase HMI1, mitochondrial (706 aa).

The region spanning 5–277 is the UvrD-like helicase ATP-binding domain; that stretch reads TPSQWKVINK…LKLFDNFRST (273 aa). Residues 29–34 and Arg-275 contribute to the ATP site; that span reads GSGKTL. Residues 278–593 enclose the UvrD-like helicase C-terminal domain; the sequence is PEIISLASKI…KLSTIHSAKG (316 aa). Residues 693 to 706 constitute a propeptide, cleaved upon import into mitochondrion; sequence YSSLRGCKSVFRRI.

Belongs to the helicase family. UvrD subfamily. It depends on Mg(2+) as a cofactor.

It localises to the mitochondrion inner membrane. It carries out the reaction Couples ATP hydrolysis with the unwinding of duplex DNA by translocating in the 3'-5' direction.. The enzyme catalyses ATP + H2O = ADP + phosphate + H(+). Required for mitochondrial genome maintenance and mitochondrial DNA inheritance. The sequence is that of ATP-dependent DNA helicase HMI1, mitochondrial (HMI1) from Saccharomyces cerevisiae (strain ATCC 204508 / S288c) (Baker's yeast).